Here is a 130-residue protein sequence, read N- to C-terminus: Secreted RxLR effector protein 68 (130 aa).

An N-terminal signal peptide occupies residues 1–29 (MRCVCASIRRTRIIEFLMFFALSSSTASC). Asn36 is a glycosylation site (N-linked (GlcNAc...) asparagine). The RxLR signature appears at 45–48 (RWLR).

The protein belongs to the RxLR effector family.

The protein resides in the secreted. It is found in the host cytoplasm. It localises to the host nucleus. Functionally, effector that acts as a broad suppressor of cell death to interrupt plant immunity. Inhibits cell death induced by cell death-inducing proteins, including the PAMP elicitor INF1 from P.infestans. The protein is Secreted RxLR effector protein 68 of Plasmopara viticola (Downy mildew of grapevine).